Reading from the N-terminus, the 170-residue chain is uncharacterized protein (170 aa).

Residues 7-27 (LVELLIGLAIISIALNFAVPL) form a helical membrane-spanning segment.

The protein localises to the membrane. This is an uncharacterized protein from Haemophilus influenzae (strain ATCC 51907 / DSM 11121 / KW20 / Rd).